A 124-amino-acid polypeptide reads, in one-letter code: MPTINQLVRKGRRDKIAKVKTAALKGSPQRRGVCTRVYTTTPKKPNSALRKVARVRLTSAVEVTAYIPGEGHNLQEHSMVLVRGGRVKDLPGVRYKIIRGSLDTQGVKNRKQARSRYGAKKEKS.

Aspartate 89 is modified (3-methylthioaspartic acid). Positions 105 to 124 (QGVKNRKQARSRYGAKKEKS) are disordered. Residues 108-118 (KNRKQARSRYG) show a composition bias toward basic residues.

The protein belongs to the universal ribosomal protein uS12 family. As to quaternary structure, part of the 30S ribosomal subunit. Contacts proteins S8 and S17. May interact with IF1 in the 30S initiation complex.

With S4 and S5 plays an important role in translational accuracy. Its function is as follows. Interacts with and stabilizes bases of the 16S rRNA that are involved in tRNA selection in the A site and with the mRNA backbone. Located at the interface of the 30S and 50S subunits, it traverses the body of the 30S subunit contacting proteins on the other side and probably holding the rRNA structure together. The combined cluster of proteins S8, S12 and S17 appears to hold together the shoulder and platform of the 30S subunit. This chain is Small ribosomal subunit protein uS12, found in Mycobacteroides abscessus (strain ATCC 19977 / DSM 44196 / CCUG 20993 / CIP 104536 / JCM 13569 / NCTC 13031 / TMC 1543 / L948) (Mycobacterium abscessus).